The following is a 594-amino-acid chain: Lipolysis-stimulated lipoprotein receptor (594 aa).

Residues 1–35 (MAPAASACAGAPGSHPATTIFVCLFLIIYCPDRAS) form the signal peptide. The Extracellular segment spans residues 36-206 (AIQVTVPDPY…PGFRAGPLED (171 aa)). The Ig-like V-type domain occupies 89–181 (PASVDNQLNA…DLDGNNEAYA (93 aa)). Cys113 and Cys165 form a disulfide bridge. A helical membrane pass occupies residues 207–227 (WLFVVVVCLASLLFFLLLGIC). Over 228 to 594 (WCQCCPHTCC…LALSRESLVV (367 aa)) the chain is Cytoplasmic. Thr283 is subject to Phosphothreonine. Ser308 is subject to Phosphoserine; by MAPK8 and MAPK9. Residues Ser314, Ser332, Ser375, and Ser379 each carry the phosphoserine modification. Residues 375–387 (SEVTSLHEDDWRS) are compositionally biased toward basic and acidic residues. The segment at 375-594 (SEVTSLHEDD…LALSRESLVV (220 aa)) is disordered. Thr396 carries the phosphothreonine modification. Ser407, Ser410, and Ser436 each carry phosphoserine. Positions 435–444 (RSVDALDDIN) are enriched in basic and acidic residues. A compositionally biased stretch (low complexity) spans 445-460 (RPGSTESGRSSPPSSG). Phosphoserine occurs at positions 471 and 473. Residues 472–550 (RSRDDLYDPD…GAGERRRVYR (79 aa)) show a composition bias toward basic and acidic residues. Residue Tyr478 is modified to Phosphotyrosine. Phosphoserine is present on Ser576. Lys583 is covalently cross-linked (Glycyl lysine isopeptide (Lys-Gly) (interchain with G-Cter in ubiquitin)). A phosphoserine mark is found at Ser588 and Ser591.

Belongs to the immunoglobulin superfamily. LISCH7 family. In terms of assembly, homotrimer or homotetramer. Assembles into cell-cell contacts. Interacts (via the cytoplasmic domain) with MARVELD2 (via C-terminal cytoplasmic domain); the interaction is required to recruit MARVELD2 to tricellular contacts. Interacts with OCLN. Phosphorylation at Ser-308 by MAPK8/JNK1 and MAPK9/JNK2 may be required for exclusive localization at tricellular tight junstions. In terms of processing, polyubiquitinated at Lys-583 via 'Lys-63'-linked ubiquitin chains; deubiquitinated by USP53. As to expression, expressed in epithelial tissues (at protein level). Specifically expressed in liver and to a lower extent in kidney (at protein level). Also detected in brain, testis, ovaries, adrenal gland, intestine, muscle, and lung. In colon, only expressed in the lower portion of crypts. Expressed in the liver. In terms of tissue distribution, expressed in liver, stomach, small intestine and colon. Also detected in other epithelial tissues.

It is found in the cell membrane. Its subcellular location is the cell junction. The protein resides in the tight junction. Functionally, probable role in the clearance of triglyceride-rich lipoprotein from blood. Binds chylomicrons, LDL and VLDL in presence of free fatty acids and allows their subsequent uptake in the cells. Maintains epithelial barrier function by recruiting MARVELD2/tricellulin to tricellular tight junctions. The sequence is that of Lipolysis-stimulated lipoprotein receptor from Mus musculus (Mouse).